We begin with the raw amino-acid sequence, 486 residues long: Ribulose bisphosphate carboxylase large chain (486 aa).

Substrate-binding residues include N125 and T175. The active-site Proton acceptor is K177. Residue K179 participates in substrate binding. K203, D205, and E206 together coordinate Mg(2+). At K203 the chain carries N6-carboxylysine. H295 functions as the Proton acceptor in the catalytic mechanism. The substrate site is built by R296, H328, and S380.

It belongs to the RuBisCO large chain family. Type I subfamily. In terms of assembly, heterohexadecamer of 8 large chains and 8 small chains. Mg(2+) serves as cofactor.

It catalyses the reaction 2 (2R)-3-phosphoglycerate + 2 H(+) = D-ribulose 1,5-bisphosphate + CO2 + H2O. It carries out the reaction D-ribulose 1,5-bisphosphate + O2 = 2-phosphoglycolate + (2R)-3-phosphoglycerate + 2 H(+). RuBisCO catalyzes two reactions: the carboxylation of D-ribulose 1,5-bisphosphate, the primary event in carbon dioxide fixation, as well as the oxidative fragmentation of the pentose substrate. Both reactions occur simultaneously and in competition at the same active site. This Afipia carboxidovorans (strain ATCC 49405 / DSM 1227 / KCTC 32145 / OM5) (Oligotropha carboxidovorans) protein is Ribulose bisphosphate carboxylase large chain.